The chain runs to 347 residues: Methylthioribose-1-phosphate isomerase (347 aa).

Substrate is bound by residues 45 to 47, Arg-88, and Gln-197; that span reads RGA. Asp-238 functions as the Proton donor in the catalytic mechanism. 248 to 249 is a binding site for substrate; that stretch reads NK.

Belongs to the eIF-2B alpha/beta/delta subunits family. MtnA subfamily.

The enzyme catalyses 5-(methylsulfanyl)-alpha-D-ribose 1-phosphate = 5-(methylsulfanyl)-D-ribulose 1-phosphate. It functions in the pathway amino-acid biosynthesis; L-methionine biosynthesis via salvage pathway; L-methionine from S-methyl-5-thio-alpha-D-ribose 1-phosphate: step 1/6. In terms of biological role, catalyzes the interconversion of methylthioribose-1-phosphate (MTR-1-P) into methylthioribulose-1-phosphate (MTRu-1-P). The protein is Methylthioribose-1-phosphate isomerase of Trichormus variabilis (strain ATCC 29413 / PCC 7937) (Anabaena variabilis).